Consider the following 564-residue polypeptide: Lamassu protein LmuB (564 aa).

In terms of biological role, component of antiviral defense system Lamassu type II, composed of LmuA and LmuB. Expression of Lamassu type II in B.subtilis (strain BEST7003) confers resistance to phage SpBeta. May be an ATPase. This Bacillus cereus (strain VD014) protein is Lamassu protein LmuB.